The primary structure comprises 64 residues: Cytochrome c oxidase subunit 9, mitochondrial (64 aa).

Over 1-15 the chain is Mitochondrial matrix; the sequence is MAATAVRPITGMLRR. Residues 16-36 form a helical membrane-spanning segment; the sequence is GLILDIGIALGVGFVMANGYW. Over 37–64 the chain is Mitochondrial intermembrane; the sequence is YGYHMPRTNARDNYYKKLEEERAARMGA.

Belongs to the fungal cytochrome c oxidase subunit 7a family. In terms of assembly, component of the cytochrome c oxidase (complex IV, CIV), a multisubunit enzyme composed of 11 subunits. The complex is composed of a catalytic core of 3 subunits Cox1, Cox2 and Cox3, encoded in the mitochondrial DNA, and 8 supernumerary subunits Cox4, Cox5a/Cox5, Cox6, Cox7, Cox8, Cox7a/Cox9, Cox6b/Cox12 and Cox6a/Cox13, which are encoded in the nuclear genome. The complex exists as a monomer or a dimer and forms respiratory supercomplexes (SCs) in the inner mitochondrial membrane with NADH-ubiquinone oxidoreductase (complex I, CI) and ubiquinol-cytochrome c oxidoreductase (cytochrome b-c1 complex, complex III, CIII), resulting in various different assemblies (supercomplexes I(1)IV(1), I(1)III(3)IV(2), III(2)IV(1) and III(2)IV(2) as well as larger supercomplexes of compositions like I(1)III(2)IV(5-6)).

It is found in the mitochondrion inner membrane. The protein operates within energy metabolism; oxidative phosphorylation. Its function is as follows. Component of the cytochrome c oxidase, the last enzyme in the mitochondrial electron transport chain which drives oxidative phosphorylation. The respiratory chain contains 3 multisubunit complexes succinate dehydrogenase (complex II, CII), ubiquinol-cytochrome c oxidoreductase (cytochrome b-c1 complex, complex III, CIII) and cytochrome c oxidase (complex IV, CIV), that cooperate to transfer electrons derived from NADH and succinate to molecular oxygen, creating an electrochemical gradient over the inner membrane that drives transmembrane transport and the ATP synthase. Cytochrome c oxidase is the component of the respiratory chain that catalyzes the reduction of oxygen to water. Electrons originating from reduced cytochrome c in the intermembrane space (IMS) are transferred via the dinuclear copper A center (CU(A)) of Cox2 and heme A of Cox1 to the active site in Cox1, a binuclear center (BNC) formed by heme A3 and copper B (CU(B)). The BNC reduces molecular oxygen to 2 water molecules using 4 electrons from cytochrome c in the IMS and 4 protons from the mitochondrial matrix. This chain is Cytochrome c oxidase subunit 9, mitochondrial (cox-17), found in Neurospora crassa (strain ATCC 24698 / 74-OR23-1A / CBS 708.71 / DSM 1257 / FGSC 987).